The following is a 710-amino-acid chain: Probable inactive DNA (cytosine-5)-methyltransferase DRM3 (710 aa).

Residues 1 to 21 (MADMRRRNGSGGSSNHERNEQ) form a disordered region. The UBA 1 domain maps to 52 to 92 (SGSNVKSLLIEMGFCPTLVQKAIDENGQDDFELLLEILTKS). Positions 167 to 184 (ESEDSLDGAEINEEDEDV) are enriched in acidic residues. The disordered stretch occupies residues 167 to 192 (ESEDSLDGAEINEEDEDVTPVTARGP). In terms of domain architecture, UBA 2 spans 198–242 (QLFETMDKTLRLLEMGFSNDEISMAIEKIGTKGQISVLAESIVTG). A disordered region spans residues 282–360 (AQKEDGGGGS…MGDSSSFMET (79 aa)). Over residues 339 to 350 (YDDRGKRLRPED) the composition is skewed to basic and acidic residues. Residues 379-710 (QPRLSQSLGP…RVTKRVRDMM (332 aa)) enclose the SAM-dependent MTase DRM-type domain.

It belongs to the class I-like SAM-binding methyltransferase superfamily. DRM-methyltransferase family. As to quaternary structure, interacts with Pol V.

It is found in the nucleus. Functionally, catalytically inactive DNA methyltransferase that acts as regulatory factor for DRM2-mediated DNA methylation. Required for maintenance of non-CpG DNA methylation. Required for normal establishment and maintenance of RNA-directed DNA methylation (RdDM) and accumulation of specific repeat-associated small interfering RNAs (siRNAs). Required for nucleolus organizer region (NOR) nuclear organization during interphase. Acts downstream of the production of siRNAs. May promote RNA polymerase V (Pol V) transcriptional elongation or assist in the stabilization of Pol V transcripts. This chain is Probable inactive DNA (cytosine-5)-methyltransferase DRM3, found in Arabidopsis thaliana (Mouse-ear cress).